The following is a 327-amino-acid chain: MEEAPAEQRHVPVLLDRCLDLLAPALDTEAPVVLDATLGMGGHTHAMLERFPHLRVVGIDRDPQALELAGRRLQRFGSRFASIHTTYDHIADAAAAAGVERVDGVLFDLGVSSLQLDERERGFAYSFDAPLDMRMDSRAELSAYTVVNEYSEARLRDIIFRWGEDRFAPRIARAIVAARADAPLRTTAQLVDAVRSAVPAAAQHKKGHPAKQTFQALRIEVNEELDVLERAIPAAVETVRVGGRVIAMSYHSLEDRIVKQEFARGARSTAPRGFPVELPEHQPVLKVLTRGAERADEQETLENPRAASARLRAVERLRETTTPGSAR.

Residues 41-43, Asp60, Tyr87, Asp108, and Gln115 each bind S-adenosyl-L-methionine; that span reads GGH. A disordered region spans residues 292–327; it reads AERADEQETLENPRAASARLRAVERLRETTTPGSAR.

The protein belongs to the methyltransferase superfamily. RsmH family.

The protein localises to the cytoplasm. The catalysed reaction is cytidine(1402) in 16S rRNA + S-adenosyl-L-methionine = N(4)-methylcytidine(1402) in 16S rRNA + S-adenosyl-L-homocysteine + H(+). Functionally, specifically methylates the N4 position of cytidine in position 1402 (C1402) of 16S rRNA. The protein is Ribosomal RNA small subunit methyltransferase H of Kocuria rhizophila (strain ATCC 9341 / DSM 348 / NBRC 103217 / DC2201).